Here is a 307-residue protein sequence, read N- to C-terminus: Protoheme IX farnesyltransferase (307 aa).

The next 9 helical transmembrane spans lie at 28–48, 50–70, 99–117, 121–138, 146–166, 173–193, 219–239, 241–261, and 278–298; these read LVIFTGICGLLAAPGAINPIL, FTAILCIAMGAGGSAALNQWW, FGILISVASVGIMGIAINW, IILAAAIVYYAVIYTIWL, IVIGGGAGAFPPMIGWVAVTG, VLLFAIIFMWTPPHFWALALF, ILVYSILLIPFAVAPWAIGAT, AIYGVSALLLTGAFAALSVPV, and LFGFSILYLFALFAALVADRY.

Belongs to the UbiA prenyltransferase family. Protoheme IX farnesyltransferase subfamily.

Its subcellular location is the cell inner membrane. The enzyme catalyses heme b + (2E,6E)-farnesyl diphosphate + H2O = Fe(II)-heme o + diphosphate. The protein operates within porphyrin-containing compound metabolism; heme O biosynthesis; heme O from protoheme: step 1/1. Its function is as follows. Converts heme B (protoheme IX) to heme O by substitution of the vinyl group on carbon 2 of heme B porphyrin ring with a hydroxyethyl farnesyl side group. The sequence is that of Protoheme IX farnesyltransferase from Erythrobacter litoralis (strain HTCC2594).